We begin with the raw amino-acid sequence, 333 residues long: Transcription initiation factor IIB (333 aa).

The TFIIB-type zinc-finger motif lies at 33–64; that stretch reads EVYRCPICGNDRFVYNYERGEIVCIVCGAVVQ. 4 residues coordinate Zn(2+): C37, C40, C56, and C59. 2 tandem repeats follow at residues 149–232 and 243–324.

This sequence belongs to the TFIIB family.

Functionally, stabilizes TBP binding to an archaeal box-A promoter. Also responsible for recruiting RNA polymerase II to the pre-initiation complex (DNA-TBP-TFIIB). This Pyrobaculum islandicum (strain DSM 4184 / JCM 9189 / GEO3) protein is Transcription initiation factor IIB.